The following is a 433-amino-acid chain: Zinc carboxypeptidase A 1 (433 aa).

Residues 1 to 28 (MVRLNSAAGSRWWAPAMAILAVALSVEA) form the signal peptide. Positions 130-423 (DYHTLEEIHA…DSLITLLEES (294 aa)) constitute a Peptidase M14 domain. Positions 187 and 190 each coordinate Zn(2+). Cysteines 253 and 276 form a disulfide. His312 lines the Zn(2+) pocket. Glu387 functions as the Proton donor/acceptor in the catalytic mechanism.

It belongs to the peptidase M14 family. Zn(2+) is required as a cofactor. As to expression, expressed in the posterior midgut in pupae and female adults.

The protein localises to the secreted. Functionally, involved in the digestion of the blood meal. This chain is Zinc carboxypeptidase A 1, found in Anopheles gambiae (African malaria mosquito).